We begin with the raw amino-acid sequence, 533 residues long: Retinoid isomerohydrolase (533 aa).

The residue at position 2 (Ser2) is an N-acetylserine. Residue Cys112 is the site of S-palmitoyl cysteine; in membrane form attachment. His180 lines the Fe cation pocket. Cys231 is lipidated: S-palmitoyl cysteine; in membrane form. Residues His241 and His313 each coordinate Fe cation. S-palmitoyl cysteine; in membrane form attachment occurs at residues Cys329 and Cys330. His527 contributes to the Fe cation binding site.

This sequence belongs to the carotenoid oxygenase family. Fe(2+) is required as a cofactor. Palmitoylation by LRAT regulates ligand binding specificity; the palmitoylated form (membrane form) specifically binds all-trans-retinyl-palmitate, while the soluble unpalmitoylated form binds all-trans-retinol (vitamin A). In terms of tissue distribution, retinal pigment epithelium specific.

It localises to the cell membrane. The enzyme catalyses an all-trans-retinyl ester + H2O = 11-cis-retinol + a fatty acid + H(+). It catalyses the reaction lutein = (3R,3'S)-zeaxanthin. It carries out the reaction all-trans-retinyl hexadecanoate + H2O = 11-cis-retinol + hexadecanoate + H(+). Functionally, critical isomerohydrolase in the retinoid cycle involved in regeneration of 11-cis-retinal, the chromophore of rod and cone opsins. Catalyzes the cleavage and isomerization of all-trans-retinyl fatty acid esters to 11-cis-retinol which is further oxidized by 11-cis retinol dehydrogenase to 11-cis-retinal for use as visual chromophore. Essential for the production of 11-cis retinal for both rod and cone photoreceptors. Also capable of catalyzing the isomerization of lutein to meso-zeaxanthin an eye-specific carotenoid. The soluble form binds vitamin A (all-trans-retinol), making it available for LRAT processing to all-trans-retinyl ester. The membrane form, palmitoylated by LRAT, binds all-trans-retinyl esters, making them available for IMH (isomerohydrolase) processing to all-cis-retinol. The soluble form is regenerated by transferring its palmitoyl groups onto 11-cis-retinol, a reaction catalyzed by LRAT. The polypeptide is Retinoid isomerohydrolase (RPE65) (Cynops pyrrhogaster (Japanese fire-bellied newt)).